The following is a 155-amino-acid chain: Small ribosomal subunit protein uS7 (155 aa).

It belongs to the universal ribosomal protein uS7 family. In terms of assembly, part of the 30S ribosomal subunit. Contacts proteins S9 and S11.

One of the primary rRNA binding proteins, it binds directly to 16S rRNA where it nucleates assembly of the head domain of the 30S subunit. Is located at the subunit interface close to the decoding center, probably blocks exit of the E-site tRNA. The sequence is that of Small ribosomal subunit protein uS7 from Malacoplasma penetrans (strain HF-2) (Mycoplasma penetrans).